We begin with the raw amino-acid sequence, 264 residues long: Thymidylate synthase (264 aa).

Arginine 21 contacts dUMP. Histidine 51 is a (6R)-5,10-methylene-5,6,7,8-tetrahydrofolate binding site. Residue 126-127 (RR) participates in dUMP binding. Catalysis depends on cysteine 146, which acts as the Nucleophile. DUMP contacts are provided by residues 166 to 169 (RSAD), asparagine 177, and 207 to 209 (HLY). Aspartate 169 contacts (6R)-5,10-methylene-5,6,7,8-tetrahydrofolate. Alanine 263 serves as a coordination point for (6R)-5,10-methylene-5,6,7,8-tetrahydrofolate.

The protein belongs to the thymidylate synthase family. Bacterial-type ThyA subfamily. In terms of assembly, homodimer.

It localises to the cytoplasm. It catalyses the reaction dUMP + (6R)-5,10-methylene-5,6,7,8-tetrahydrofolate = 7,8-dihydrofolate + dTMP. The protein operates within pyrimidine metabolism; dTTP biosynthesis. In terms of biological role, catalyzes the reductive methylation of 2'-deoxyuridine-5'-monophosphate (dUMP) to 2'-deoxythymidine-5'-monophosphate (dTMP) while utilizing 5,10-methylenetetrahydrofolate (mTHF) as the methyl donor and reductant in the reaction, yielding dihydrofolate (DHF) as a by-product. This enzymatic reaction provides an intracellular de novo source of dTMP, an essential precursor for DNA biosynthesis. In Methylorubrum extorquens (strain CM4 / NCIMB 13688) (Methylobacterium extorquens), this protein is Thymidylate synthase.